Consider the following 214-residue polypeptide: Phosphatidylcholine transfer protein (214 aa).

Met-1 is modified (N-acetylmethionine). Residues 1-212 (MAGAACCFSD…MVKACQNYHK (212 aa)) form the START domain. Residues Tyr-72 and Arg-78 each contribute to the a 1,2-diacyl-sn-glycero-3-phosphocholine site. Phosphoserine is present on Ser-139. Gln-157 lines the a 1,2-diacyl-sn-glycero-3-phosphocholine pocket.

In terms of assembly, interacts with ACOT13/THEM2. In terms of tissue distribution, abundant in liver of pups but levels in liver decrease 10-fold about 2 weeks after birth. In adult, highly expressed in epididymis, testis, kidney and bone-marrow derived mast cells.

The protein localises to the cytoplasm. Functionally, catalyzes the transfer of phosphatidylcholine between membranes. Binds a single lipid molecule. This chain is Phosphatidylcholine transfer protein (Pctp), found in Mus musculus (Mouse).